Here is a 363-residue protein sequence, read N- to C-terminus: Flagellar P-ring protein (363 aa).

The signal sequence occupies residues 1–20 (MKLKLFLLSVLLLVSGSSQA).

This sequence belongs to the FlgI family. As to quaternary structure, the basal body constitutes a major portion of the flagellar organelle and consists of four rings (L,P,S, and M) mounted on a central rod.

Its subcellular location is the periplasm. The protein resides in the bacterial flagellum basal body. Its function is as follows. Assembles around the rod to form the L-ring and probably protects the motor/basal body from shearing forces during rotation. The protein is Flagellar P-ring protein of Shewanella woodyi (strain ATCC 51908 / MS32).